The primary structure comprises 896 residues: Probable sodium/sulfate cotransporter 3 (896 aa).

A run of 5 helical transmembrane segments spans residues Met-1–Ile-21, Ile-47–Tyr-69, Val-106–Leu-126, Leu-140–Ser-160, and Met-186–Leu-206. RCK C-terminal domains lie at Leu-212 to Leu-296, Thr-319 to Asn-404, Leu-408 to Leu-493, and Glu-499 to Val-586. Helical transmembrane passes span Met-602–Lys-622, Tyr-626–Met-646, Ala-654–Glu-674, Ala-685–Val-705, Leu-734–Ile-754, Phe-776–Cys-796, and Val-804–Leu-824. The disordered stretch occupies residues Arg-857–Pro-881. Positions Val-868–Pro-881 are enriched in polar residues.

Belongs to the divalent anion:Na+ symporter (DASS) superfamily. Na+/sulfate symporter (TC 2.A.47.4) family.

The protein resides in the cell membrane. Its function is as follows. Na(+)/sulfate cotransporter with a probable low-affinity for sulfate. The chain is Probable sodium/sulfate cotransporter 3 (SLT3) from Chlamydomonas reinhardtii (Chlamydomonas smithii).